The primary structure comprises 619 residues: 1-deoxy-D-xylulose-5-phosphate synthase (619 aa).

Residues His74 and Gly115–Ser117 each bind thiamine diphosphate. Position 146 (Asp146) interacts with Mg(2+). Thiamine diphosphate contacts are provided by residues Gly147–Ala148, Asn175, Tyr285, and Glu365. Mg(2+) is bound at residue Asn175.

The protein belongs to the transketolase family. DXPS subfamily. As to quaternary structure, homodimer. The cofactor is Mg(2+). Requires thiamine diphosphate as cofactor.

The catalysed reaction is D-glyceraldehyde 3-phosphate + pyruvate + H(+) = 1-deoxy-D-xylulose 5-phosphate + CO2. It functions in the pathway metabolic intermediate biosynthesis; 1-deoxy-D-xylulose 5-phosphate biosynthesis; 1-deoxy-D-xylulose 5-phosphate from D-glyceraldehyde 3-phosphate and pyruvate: step 1/1. Catalyzes the acyloin condensation reaction between C atoms 2 and 3 of pyruvate and glyceraldehyde 3-phosphate to yield 1-deoxy-D-xylulose-5-phosphate (DXP). This Clostridium perfringens (strain 13 / Type A) protein is 1-deoxy-D-xylulose-5-phosphate synthase.